The sequence spans 176 residues: Ribosome maturation factor RimM (176 aa).

In terms of domain architecture, PRC barrel spans 97-176 (EDEFYWRDLI…QITVDWDPDF (80 aa)).

It belongs to the RimM family. As to quaternary structure, binds ribosomal protein uS19.

Its subcellular location is the cytoplasm. Its function is as follows. An accessory protein needed during the final step in the assembly of 30S ribosomal subunit, possibly for assembly of the head region. Essential for efficient processing of 16S rRNA. May be needed both before and after RbfA during the maturation of 16S rRNA. It has affinity for free ribosomal 30S subunits but not for 70S ribosomes. In Shewanella sediminis (strain HAW-EB3), this protein is Ribosome maturation factor RimM.